We begin with the raw amino-acid sequence, 376 residues long: Ribosomal RNA large subunit methyltransferase G (376 aa).

It belongs to the methyltransferase superfamily. RlmG family.

It localises to the cytoplasm. It carries out the reaction guanosine(1835) in 23S rRNA + S-adenosyl-L-methionine = N(2)-methylguanosine(1835) in 23S rRNA + S-adenosyl-L-homocysteine + H(+). Functionally, specifically methylates the guanine in position 1835 (m2G1835) of 23S rRNA. The chain is Ribosomal RNA large subunit methyltransferase G from Cronobacter sakazakii (strain ATCC BAA-894) (Enterobacter sakazakii).